A 595-amino-acid polypeptide reads, in one-letter code: Aspartate--tRNA(Asp/Asn) ligase (595 aa).

Position 175 (glutamate 175) interacts with L-aspartate. The tract at residues 199–202 (QQYK) is aspartate. Residues arginine 221 and histidine 454 each coordinate L-aspartate. 221–223 (RDE) contributes to the ATP binding site. Residue glutamate 488 participates in ATP binding. Arginine 495 serves as a coordination point for L-aspartate. An ATP-binding site is contributed by 540-543 (GIDR).

This sequence belongs to the class-II aminoacyl-tRNA synthetase family. Type 1 subfamily. Homodimer.

It is found in the cytoplasm. The catalysed reaction is tRNA(Asx) + L-aspartate + ATP = L-aspartyl-tRNA(Asx) + AMP + diphosphate. Aspartyl-tRNA synthetase with relaxed tRNA specificity since it is able to aspartylate not only its cognate tRNA(Asp) but also tRNA(Asn). Reaction proceeds in two steps: L-aspartate is first activated by ATP to form Asp-AMP and then transferred to the acceptor end of tRNA(Asp/Asn). The sequence is that of Aspartate--tRNA(Asp/Asn) ligase from Agrobacterium fabrum (strain C58 / ATCC 33970) (Agrobacterium tumefaciens (strain C58)).